The chain runs to 193 residues: Imidazoleglycerol-phosphate dehydratase (193 aa).

This sequence belongs to the imidazoleglycerol-phosphate dehydratase family.

Its subcellular location is the cytoplasm. The catalysed reaction is D-erythro-1-(imidazol-4-yl)glycerol 3-phosphate = 3-(imidazol-4-yl)-2-oxopropyl phosphate + H2O. Its pathway is amino-acid biosynthesis; L-histidine biosynthesis; L-histidine from 5-phospho-alpha-D-ribose 1-diphosphate: step 6/9. The protein is Imidazoleglycerol-phosphate dehydratase of Saccharolobus islandicus (strain M.16.27) (Sulfolobus islandicus).